A 191-amino-acid chain; its full sequence is 3-isopropylmalate dehydratase small subunit (191 aa).

It belongs to the LeuD family. LeuD type 1 subfamily. Heterodimer of LeuC and LeuD.

It carries out the reaction (2R,3S)-3-isopropylmalate = (2S)-2-isopropylmalate. It functions in the pathway amino-acid biosynthesis; L-leucine biosynthesis; L-leucine from 3-methyl-2-oxobutanoate: step 2/4. Its function is as follows. Catalyzes the isomerization between 2-isopropylmalate and 3-isopropylmalate, via the formation of 2-isopropylmaleate. The polypeptide is 3-isopropylmalate dehydratase small subunit (Solibacter usitatus (strain Ellin6076)).